Consider the following 264-residue polypeptide: uncharacterized protein (264 aa).

The first 22 residues, 1–22, serve as a signal peptide directing secretion; that stretch reads MGYLKKLALFISVIILGIFIIG. The N-palmitoyl cysteine moiety is linked to residue Cys23. The S-diacylglycerol cysteine moiety is linked to residue Cys23.

It belongs to the staphylococcal tandem lipoprotein family.

It is found in the cell membrane. This is an uncharacterized protein from Staphylococcus aureus (strain N315).